The following is a 606-amino-acid chain: Retrovirus-related Pol polyprotein from type-1 retrotransposable element R2 (606 aa).

The Reverse transcriptase domain maps to 1 to 208 (GTLANIIMLE…NTFKYLGLTF (208 aa)). A nucleic acid-binding endonuclease region spans residues 331 to 606 (IFNIEGPARS…PPDPPRPVPP (276 aa)).

It carries out the reaction DNA(n) + a 2'-deoxyribonucleoside 5'-triphosphate = DNA(n+1) + diphosphate. The chain is Retrovirus-related Pol polyprotein from type-1 retrotransposable element R2 from Popillia japonica (Japanese beetle).